We begin with the raw amino-acid sequence, 290 residues long: uncharacterized protein (290 aa).

The 237-residue stretch at 2-238 folds into the ABC transporter domain; sequence LKTENLSVGY…EIVNELYDLK (237 aa). 34–41 is a binding site for ATP; it reads GPNGAGKS.

This sequence belongs to the ABC transporter superfamily.

This is an uncharacterized protein from Methanocaldococcus jannaschii (strain ATCC 43067 / DSM 2661 / JAL-1 / JCM 10045 / NBRC 100440) (Methanococcus jannaschii).